A 352-amino-acid polypeptide reads, in one-letter code: tRNA pseudouridine synthase D (352 aa).

Asp81 (nucleophile) is an active-site residue. The region spanning 157 to 303 (GVPNYFGLQR…MLHERRILRL (147 aa)) is the TRUD domain.

Belongs to the pseudouridine synthase TruD family.

It catalyses the reaction uridine(13) in tRNA = pseudouridine(13) in tRNA. Functionally, responsible for synthesis of pseudouridine from uracil-13 in transfer RNAs. In Azotobacter vinelandii (strain DJ / ATCC BAA-1303), this protein is tRNA pseudouridine synthase D.